Consider the following 233-residue polypeptide: 7-cyano-7-deazaguanine synthase (233 aa).

13–23 (LSGGLDSTTCL) contacts ATP. Zn(2+) is bound by residues Cys197, Cys206, Cys209, and Cys212.

It belongs to the QueC family. Zn(2+) serves as cofactor.

The catalysed reaction is 7-carboxy-7-deazaguanine + NH4(+) + ATP = 7-cyano-7-deazaguanine + ADP + phosphate + H2O + H(+). It functions in the pathway purine metabolism; 7-cyano-7-deazaguanine biosynthesis. Functionally, catalyzes the ATP-dependent conversion of 7-carboxy-7-deazaguanine (CDG) to 7-cyano-7-deazaguanine (preQ(0)). This is 7-cyano-7-deazaguanine synthase from Anaeromyxobacter sp. (strain Fw109-5).